The following is a 470-amino-acid chain: MSLFGTNTTSQTPAGGGLFGTTTSQSAQTGSLFGTATSQPQQTGGLFGSTATQTPSSQLQSTGLFGSTTATSQPQQTGGLFGSTTTTTSQPQQTGGLFGATATSQPQSTGGLFGNTTTTSQPAQTVGLFGTTTQPQPAQSGGLFGSATQQKPATGGLFGSTTTNTGAGLFGNTSNTIGGGGLFGQTAKPATGGLFGQSTTQPQQQQNATPGLTMGQSTNTQQQVVPGVRIDLSNIKSTTRFNDLTEALQQEIAKIDEEIQKCIRDKEAVDAFLPAHGEQLAAIPTDVNFVTRKSEGAHNALSSDILAIDQLRELVKQDADNARLSFKAIDNLKLPMQYHQAGLWSKQMGGAGTAGASGASADADGQSNADLISYFSKTADEMEEMMKKFEKTITEIEAHLTGVEAHAMAMQNVAAQSRNAAQGGVDERVYELAAVLREFEESILKVAGVVGGVKEGVTELQLRDFMGHGS.

The span at 1 to 13 (MSLFGTNTTSQTP) shows a compositional bias: polar residues. The disordered stretch occupies residues 1-92 (MSLFGTNTTS…STTTTTSQPQ (92 aa)). 12 GLFG repeats span residues 17 to 20 (GLFG), 45 to 48 (GLFG), 63 to 66 (GLFG), 79 to 82 (GLFG), 96 to 99 (GLFG), 111 to 114 (GLFG), 127 to 130 (GLFG), 142 to 145 (GLFG), 156 to 159 (GLFG), 168 to 171 (GLFG), 181 to 184 (GLFG), and 193 to 197 (GLFGQ). Low complexity predominate over residues 20–31 (GTTTSQSAQTGS). The segment covering 32–74 (LFGTATSQPQQTGGLFGSTATQTPSSQLQSTGLFGSTTATSQP) has biased composition (polar residues). The segment covering 75–92 (QQTGGLFGSTTTTTSQPQ) has biased composition (low complexity). The tract at residues 196–221 (GQSTTQPQQQQNATPGLTMGQSTNTQ) is disordered. The segment covering 197–206 (QSTTQPQQQQ) has biased composition (low complexity). The span at 207-221 (NATPGLTMGQSTNTQ) shows a compositional bias: polar residues. Coiled coils occupy residues 239-270 (TRFNDLTEALQQEIAKIDEEIQKCIRDKEAVD) and 375-401 (FSKTADEMEEMMKKFEKTITEIEAHLT).

The protein belongs to the nucleoporin GLFG family. Component of the nuclear pore complex (NPC). NPC constitutes the exclusive means of nucleocytoplasmic transport. NPCs allow the passive diffusion of ions and small molecules and the active, nuclear transport receptor-mediated bidirectional transport of macromolecules such as proteins, RNAs, ribonucleoparticles (RNPs), and ribosomal subunits across the nuclear envelope. Due to its 8-fold rotational symmetry, all subunits are present with 8 copies or multiples thereof.

Its subcellular location is the nucleus. It is found in the nuclear pore complex. The protein resides in the nucleus membrane. In terms of biological role, functions as a component of the nuclear pore complex (NPC). NPC components, collectively referred to as nucleoporins (NUPs), can play the role of both NPC structural components and of docking or interaction partners for transiently associated nuclear transport factors. Active directional transport is assured by both, a Phe-Gly (FG) repeat affinity gradient for these transport factors across the NPC and a transport cofactor concentration gradient across the nuclear envelope (GSP1 and GSP2 GTPases associated predominantly with GTP in the nucleus, with GDP in the cytoplasm). NUP49 plays an important role in several nuclear transport pathways including poly(A)+ RNA, tRNA, and pre-ribosome transport. The chain is Nucleoporin NUP49 (NUP49) from Chaetomium thermophilum (strain DSM 1495 / CBS 144.50 / IMI 039719) (Thermochaetoides thermophila).